Reading from the N-terminus, the 576-residue chain is TRAF-type zinc finger domain-containing protein 1 (576 aa).

Residue A2 is modified to N-acetylalanine. The TRAF-type zinc-finger motif lies at 27–103 (IHEIHCQRNI…DLELSVVKLK (77 aa)). Residues S278, S320, S326, S327, S409, S415, S430, and S450 each carry the phosphoserine modification. Residues 402–432 (EGIPTQDSQPEDRSPELSRRRVKHQGDLSSG) are disordered. Over residues 411–420 (PEDRSPELSR) the composition is skewed to basic and acidic residues. Disordered stretches follow at residues 465–491 (LNSS…GSQD) and 529–576 (HGSP…EEEE). S531 is modified (phosphoserine). Residues 540–552 (GSRSSRVTPTAAS) are compositionally biased toward polar residues.

In terms of assembly, interacts with MAVS, TICAM1, TRAF1, TRAF2, TRAF3 and TRAF6. In terms of tissue distribution, expressed in vascular smooth muscle cells.

Negative feedback regulator that controls excessive innate immune responses. Regulates both Toll-like receptor 4 (TLR4) and DDX58/RIG1-like helicases (RLH) pathways. May inhibit the LTR pathway by direct interaction with TRAF6 and attenuation of NF-kappa-B activation. May negatively regulate the RLH pathway downstream from MAVS and upstream of NF-kappa-B and IRF3. This Rattus norvegicus (Rat) protein is TRAF-type zinc finger domain-containing protein 1 (Trafd1).